We begin with the raw amino-acid sequence, 395 residues long: Elongation factor Ts, mitochondrial (395 aa).

The transit peptide at 1 to 63 directs the protein to the mitochondrion; that stretch reads MAFARAVRRP…RGFGNFIRSF (63 aa).

The protein belongs to the EF-Ts family.

It is found in the mitochondrion. Functionally, associates with the EF-Tu.GDP complex and induces the exchange of GDP to GTP. It remains bound to the aminoacyl-tRNA.EF-Tu.GTP complex up to the GTP hydrolysis stage on the ribosome. This is Elongation factor Ts, mitochondrial from Arabidopsis thaliana (Mouse-ear cress).